Reading from the N-terminus, the 632-residue chain is Maltase 1 (632 aa).

Positions 1 to 29 are enriched in basic and acidic residues; that stretch reads MEEGERWREGHVYQRSSETRKPTNYDRPD. A disordered region spans residues 1 to 30; sequence MEEGERWREGHVYQRSSETRKPTNYDRPDS. N-linked (GlcNAc...) asparagine glycosylation is found at Asn-179 and Asn-212. Residue Asp-280 is the Nucleophile of the active site. Asn-333 is a glycosylation site (N-linked (GlcNAc...) asparagine). The Proton donor role is filled by Glu-348. Residues Asn-461, Asn-575, and Asn-578 are each glycosylated (N-linked (GlcNAc...) asparagine).

The protein belongs to the glycosyl hydrolase 13 family.

The catalysed reaction is Hydrolysis of terminal, non-reducing (1-&gt;4)-linked alpha-D-glucose residues with release of alpha-D-glucose.. This Drosophila virilis (Fruit fly) protein is Maltase 1 (Mal-B1).